Consider the following 70-residue polypeptide: MTTIRVKDNEPFDVALRRFKRTIEKLGLLTDLRAREFYEKPTAERKRKKAAAVKRNYKRIRAMQLPKKLY.

This sequence belongs to the bacterial ribosomal protein bS21 family.

This is Small ribosomal subunit protein bS21 from Polaromonas naphthalenivorans (strain CJ2).